The primary structure comprises 395 residues: Protein NDRG1 (395 aa).

Residues 325–395 (RSRTGSAASS…NTPKSMEISC (71 aa)) form a disordered region. The span at 326–339 (SRTGSAASSSSQDG) shows a compositional bias: low complexity. 4 tandem repeats follow at residues 339 to 348 (GNRSRSHTNE), 349 to 358 (GSRSRSHTGD), 359 to 368 (GNRSRAHTGD), and 369 to 378 (GNRSRSHTDS). Residues 339-378 (GNRSRSHTNEGSRSRSHTGDGNRSRAHTGDGNRSRSHTDS) form a 4 X 10 AA tandem repeats of G-[NS]-R-S-R-[AS]-H-T-[DGN]-[DES] region. Basic and acidic residues predominate over residues 345 to 376 (HTNEGSRSRSHTGDGNRSRAHTGDGNRSRSHT). The segment covering 377-389 (DSNNTNSEHNTPK) has biased composition (polar residues).

It belongs to the NDRG family.

Functionally, may be involved in pronephros development, after specification of the pronephros. This Xenopus tropicalis (Western clawed frog) protein is Protein NDRG1.